The primary structure comprises 166 residues: 3-isopropylmalate dehydratase small subunit 2 (166 aa).

Belongs to the LeuD family. LeuD type 2 subfamily. As to quaternary structure, heterodimer of LeuC and LeuD.

It catalyses the reaction (2R,3S)-3-isopropylmalate = (2S)-2-isopropylmalate. Its pathway is amino-acid biosynthesis; L-leucine biosynthesis; L-leucine from 3-methyl-2-oxobutanoate: step 2/4. In terms of biological role, catalyzes the isomerization between 2-isopropylmalate and 3-isopropylmalate, via the formation of 2-isopropylmaleate. This Thermotoga maritima (strain ATCC 43589 / DSM 3109 / JCM 10099 / NBRC 100826 / MSB8) protein is 3-isopropylmalate dehydratase small subunit 2 (leuD2).